Reading from the N-terminus, the 291-residue chain is Early E4 34 kDa protein (291 aa).

The protein belongs to the adenoviridae E4 30 to 34 kDa protein family. In terms of assembly, interacts with E1B-55k.

It is found in the host nucleus. It localises to the host cytoplasm. Its function is as follows. Plays a major role to prevent cellular inhibition of viral genome replication by nuclear bodies. Assembles an SCF-like E3 ubiquitin ligase complex based on the cellular proteins ELOB, ELOC, CUL5 and RBX1, in cooperation with viral E1B-55K. This viral RING-type ligase ubiquitinates cellular substrates prior to proteasomal degradation: p53/TP53, LIG4, MRE11-RAD50-NBS1 (MRN) complex, ITGA3, DAXX and BLM. In Homo sapiens (Human), this protein is Early E4 34 kDa protein.